A 205-amino-acid chain; its full sequence is Small ribosomal subunit protein uS4 (205 aa).

The interval 18-46 is disordered; the sequence is NIWGRSKSPVNRREYGPGQHGQRRKGKLS. Residues 94–157 form the S4 RNA-binding domain; sequence RRLDAVVYRA…RQMTLVLEAQ (64 aa).

This sequence belongs to the universal ribosomal protein uS4 family. Part of the 30S ribosomal subunit. Contacts protein S5. The interaction surface between S4 and S5 is involved in control of translational fidelity.

In terms of biological role, one of the primary rRNA binding proteins, it binds directly to 16S rRNA where it nucleates assembly of the body of the 30S subunit. Its function is as follows. With S5 and S12 plays an important role in translational accuracy. The protein is Small ribosomal subunit protein uS4 of Xanthobacter autotrophicus (strain ATCC BAA-1158 / Py2).